A 919-amino-acid chain; its full sequence is Eukaryotic translation initiation factor 3 subunit C (919 aa).

Residues 1–28 (MSRFFANGSDSESESSEEEVQAPNFNKA) are disordered. Positions 11 to 20 (SESESSEEEV) are enriched in acidic residues. Residues serine 34, serine 165, and serine 177 each carry the phosphoserine modification. The disordered stretch occupies residues 154-275 (LSRFRENPQE…EQKIKLRKRA (122 aa)). The segment covering 162 to 171 (QEESENEDEE) has biased composition (acidic residues). Positions 210 to 236 (ADDEDSDESIDWDPDTESETESSEDEN) are enriched in acidic residues. Basic and acidic residues predominate over residues 241–269 (MRERFLKRSTEKDDKDDDKRKDKRKEQKI). The 177-residue stretch at 640 to 816 (FHMHINLELL…ETVVMHRSEP (177 aa)) folds into the PCI domain. Residues 848–919 (FFQRGNMGNR…QQQVQTIDEE (72 aa)) are disordered. The segment covering 883–894 (QRNRNQRGHHKN) has biased composition (basic residues). A compositionally biased stretch (low complexity) spans 895–919 (QQNQNQQQQQQHQREQQQVQTIDEE).

The protein belongs to the eIF-3 subunit C family. In terms of assembly, component of the eukaryotic translation initiation factor 3 (eIF-3) complex. The eIF-3 complex interacts with pix.

It localises to the cytoplasm. Functionally, component of the eukaryotic translation initiation factor 3 (eIF-3) complex, which is involved in protein synthesis of a specialized repertoire of mRNAs and, together with other initiation factors, stimulates binding of mRNA and methionyl-tRNAi to the 40S ribosome. The eIF-3 complex specifically targets and initiates translation of a subset of mRNAs involved in cell proliferation. This is Eukaryotic translation initiation factor 3 subunit C from Drosophila willistoni (Fruit fly).